A 192-amino-acid chain; its full sequence is Imidazoleglycerol-phosphate dehydratase (192 aa).

Belongs to the imidazoleglycerol-phosphate dehydratase family.

The protein resides in the cytoplasm. It catalyses the reaction D-erythro-1-(imidazol-4-yl)glycerol 3-phosphate = 3-(imidazol-4-yl)-2-oxopropyl phosphate + H2O. It participates in amino-acid biosynthesis; L-histidine biosynthesis; L-histidine from 5-phospho-alpha-D-ribose 1-diphosphate: step 6/9. This chain is Imidazoleglycerol-phosphate dehydratase, found in Staphylococcus epidermidis (strain ATCC 35984 / DSM 28319 / BCRC 17069 / CCUG 31568 / BM 3577 / RP62A).